Here is a 391-residue protein sequence, read N- to C-terminus: Lipid-A-disaccharide synthase (391 aa).

This sequence belongs to the LpxB family.

It catalyses the reaction a lipid X + a UDP-2-N,3-O-bis[(3R)-3-hydroxyacyl]-alpha-D-glucosamine = a lipid A disaccharide + UDP + H(+). It functions in the pathway bacterial outer membrane biogenesis; LPS lipid A biosynthesis. Its function is as follows. Condensation of UDP-2,3-diacylglucosamine and 2,3-diacylglucosamine-1-phosphate to form lipid A disaccharide, a precursor of lipid A, a phosphorylated glycolipid that anchors the lipopolysaccharide to the outer membrane of the cell. This Azoarcus sp. (strain BH72) protein is Lipid-A-disaccharide synthase.